The sequence spans 428 residues: 3-phosphoshikimate 1-carboxyvinyltransferase (428 aa).

Residues lysine 23, serine 24, and arginine 28 each coordinate 3-phosphoshikimate. Residue lysine 23 participates in phosphoenolpyruvate binding. Phosphoenolpyruvate is bound by residues glycine 97 and arginine 125. 3-phosphoshikimate contacts are provided by serine 170, serine 171, glutamine 172, serine 198, aspartate 314, asparagine 337, and lysine 341. Glutamine 172 lines the phosphoenolpyruvate pocket. Aspartate 314 (proton acceptor) is an active-site residue. Positions 345, 387, and 412 each coordinate phosphoenolpyruvate.

Belongs to the EPSP synthase family. As to quaternary structure, monomer.

It is found in the cytoplasm. It catalyses the reaction 3-phosphoshikimate + phosphoenolpyruvate = 5-O-(1-carboxyvinyl)-3-phosphoshikimate + phosphate. Its pathway is metabolic intermediate biosynthesis; chorismate biosynthesis; chorismate from D-erythrose 4-phosphate and phosphoenolpyruvate: step 6/7. Functionally, catalyzes the transfer of the enolpyruvyl moiety of phosphoenolpyruvate (PEP) to the 5-hydroxyl of shikimate-3-phosphate (S3P) to produce enolpyruvyl shikimate-3-phosphate and inorganic phosphate. This chain is 3-phosphoshikimate 1-carboxyvinyltransferase, found in Erwinia tasmaniensis (strain DSM 17950 / CFBP 7177 / CIP 109463 / NCPPB 4357 / Et1/99).